We begin with the raw amino-acid sequence, 478 residues long: MFRLNSLSALAELAVGSRWYHGGSQPTQIRRRLMMVAFLGASAVTASTGLLWKRALAESPPSANNIKSELGDKGKSKEEGEDCNAEKKAAGVCLEPYPEEKKKKRSGFRDRKVMEYENRIRAYSTPDKIFRYFATLKVISEHGESEVFMTPQDFVRSITPNEKQPEHLGLDQYTIKRFDGKKIAQEREKFADEGSIFYTLGECGLISFSDYIFLTTVLSTPQRNFEIAFKMFDLNGDGEVDMEEFEQVQSIIRSQTSMGMRHRDRSTTGNTLKSGLCSALTTYFFGADLKGKLTIKNFLEFQRKLQHDVLKLEFERHDPVDGRITERQFGGMLLAYSGVQSKKLTAMQKQLKKHFKEGKGLTFQEVENFFTFLKNINDVDTALSFYHMAGASLDKVTMQQVARTVAKVELSDHVCDVVFALFDCDGNGELSNKEFVSIMKQRLMRGLEKPKDMGFTRLMQAMWKCAQETAWDFALPKQ.

The N-terminal 33 residues, 1-33 (MFRLNSLSALAELAVGSRWYHGGSQPTQIRRRL), are a transit peptide targeting the mitochondrion. Residues 61–85 (PSANNIKSELGDKGKSKEEGEDCNA) form a disordered region. The segment covering 69–85 (ELGDKGKSKEEGEDCNA) has biased composition (basic and acidic residues). Residues 101–112 (KKKKRSGFRDRK) form a polybasic region region. The residue at position 124 (serine 124) is a Phosphoserine. Residues 128–131 (KIFR) form a k/R-ring region. The EF-hand 1 domain maps to 220-255 (TPQRNFEIAFKMFDLNGDGEVDMEEFEQVQSIIRSQ). Residues aspartate 233, asparagine 235, aspartate 237, glutamate 239, and glutamate 244 each coordinate Ca(2+). The segment at 261 to 265 (RHRDR) is k/R-ring. The EF-hand 2 domain occupies 410 to 445 (LSDHVCDVVFALFDCDGNGELSNKEFVSIMKQRLMR). 5 residues coordinate Ca(2+): aspartate 423, aspartate 425, asparagine 427, glutamate 429, and glutamate 434. Arginine 457 bears the Asymmetric dimethylarginine mark. Residues 457–467 (RLMQAMWKCAQ) are C-helix region.

The protein belongs to the MICU1 family. MICU1 subfamily. In terms of assembly, heterodimer; disulfide-linked; heterodimerizes with MICU2 or MICU3. Homodimer; disulfide-linked. Component of the uniplex complex, composed of MCU, EMRE/SMDT1, MICU1 and MICU2 (or MICU3) in a 4:4:1:1 stoichiometry. The composition of calcium sensors within the uniplex complex can differ depending on tissues: a MICU1 homodimer can be present instead of the MICU1-MICU2 heterodimer in skeletal-muscle and kidney. MICU1 is recruited to the uniplex complex by EMRE/SMDT1, and it associates with MCU at low calcium levels, occluding the pore of the MCU channel. Associates with the MICOS complex. Interacts with SLC25A23. Interacts with CHCHD4/MIA40; which introduces the interchain disulfide bond with MICU2. Interacts (when methylated) with UCP2; leading to decrease the calcium sensitivity of MICU1. Post-translationally, phosphorylation at Ser-124 by AKT1 impairs its maturation and stability. Asymmetric dimethylation at Arg-457 by PRMT1 decreases the calcium sensitivity of MICU1 by promoting interaction with UCP2. In terms of processing, degraded by YME1L1 when not complexed as homodimer or heterodimer. Not degraded when complexed as homodimer or heterodimer; the presence of the interchain disulfide bond protecting MICU1 from degradation by YME1L1.

It is found in the mitochondrion intermembrane space. The protein localises to the mitochondrion inner membrane. Functionally, calcium sensor of the mitochondrial calcium uniporter (MCU) channel, which senses calcium level via its EF-hand domains. MICU1 and MICU2 (or MICU3) form a disulfide-linked heterodimer that stimulates and inhibits MCU activity, depending on the concentration of calcium. At low calcium levels, MICU1 occludes the pore of the MCU channel, preventing mitochondrial calcium uptake. At higher calcium levels, calcium-binding to MICU1 and MICU2 (or MICU3) induces a conformational change that weakens MCU-MICU1 interactions and moves the MICU1-MICU2 heterodimer away from the pore, allowing calcium permeation through the MCU channel. Also required to protect against manganese toxicity by preventing manganese uptake by MCU: mechanistically, manganese-binding to its EF-hand domains does not induce any conformational change, maintaining MCU pore occlusion. Acts as a regulator of mitochondrial cristae structure independently of its ability to regulate the mitochondrial calcium uniporter channel. Regulates glucose-dependent insulin secretion in pancreatic beta-cells by regulating mitochondrial calcium uptake. Induces T-helper 1-mediated autoreactivity, which is accompanied by the release of IFNG. The protein is Calcium uptake protein 1, mitochondrial (MICU1) of Bos taurus (Bovine).